Reading from the N-terminus, the 364-residue chain is Coproporphyrin III ferrochelatase (364 aa).

Residues Arg29 and Tyr118 each contribute to the Fe-coproporphyrin III site. Residues His169 and Glu250 each contribute to the Fe(2+) site.

The protein belongs to the ferrochelatase family.

It localises to the cytoplasm. The catalysed reaction is Fe-coproporphyrin III + 2 H(+) = coproporphyrin III + Fe(2+). It functions in the pathway porphyrin-containing compound metabolism; protoheme biosynthesis. In terms of biological role, involved in coproporphyrin-dependent heme b biosynthesis. Catalyzes the insertion of ferrous iron into coproporphyrin III to form Fe-coproporphyrin III. The sequence is that of Coproporphyrin III ferrochelatase from Streptococcus pneumoniae (strain Hungary19A-6).